We begin with the raw amino-acid sequence, 252 residues long: Imidazole glycerol phosphate synthase subunit HisF (252 aa).

Residues D11 and D130 contribute to the active site.

It belongs to the HisA/HisF family. In terms of assembly, heterodimer of HisH and HisF.

It is found in the cytoplasm. It carries out the reaction 5-[(5-phospho-1-deoxy-D-ribulos-1-ylimino)methylamino]-1-(5-phospho-beta-D-ribosyl)imidazole-4-carboxamide + L-glutamine = D-erythro-1-(imidazol-4-yl)glycerol 3-phosphate + 5-amino-1-(5-phospho-beta-D-ribosyl)imidazole-4-carboxamide + L-glutamate + H(+). Its pathway is amino-acid biosynthesis; L-histidine biosynthesis; L-histidine from 5-phospho-alpha-D-ribose 1-diphosphate: step 5/9. IGPS catalyzes the conversion of PRFAR and glutamine to IGP, AICAR and glutamate. The HisF subunit catalyzes the cyclization activity that produces IGP and AICAR from PRFAR using the ammonia provided by the HisH subunit. This chain is Imidazole glycerol phosphate synthase subunit HisF, found in Bacillus anthracis (strain CDC 684 / NRRL 3495).